A 79-amino-acid polypeptide reads, in one-letter code: RNA-binding protein Hfq (79 aa).

Residues 10–69 form the Sm domain; the sequence is GPFLNALRKEHVPVSIYLVNGIKLQGNIESFDQYVVLLRNTVTQMVYKHAISTVVPARAV.

It belongs to the Hfq family. Homohexamer.

RNA chaperone that binds small regulatory RNA (sRNAs) and mRNAs to facilitate mRNA translational regulation in response to envelope stress, environmental stress and changes in metabolite concentrations. Also binds with high specificity to tRNAs. The chain is RNA-binding protein Hfq from Cupriavidus necator (strain ATCC 17699 / DSM 428 / KCTC 22496 / NCIMB 10442 / H16 / Stanier 337) (Ralstonia eutropha).